Consider the following 455-residue polypeptide: Bleomycin hydrolase (455 aa).

Active-site residues include cysteine 73, histidine 372, and asparagine 396.

Belongs to the peptidase C1 family. As to quaternary structure, homooctamer.

Its subcellular location is the cytoplasm. The enzyme catalyses Inactivates bleomycin B2 (a cytotoxic glycometallopeptide) by hydrolysis of a carboxyamide bond of beta-aminoalanine, but also shows general aminopeptidase activity. The specificity varies somewhat with source, but amino acid arylamides of Met, Leu and Ala are preferred.. Functionally, the normal physiological role of BLM hydrolase is unknown, but it catalyzes the inactivation of the antitumor drug BLM (a glycopeptide) by hydrolyzing the carboxamide bond of its B-aminoalaninamide moiety thus protecting normal and malignant cells from BLM toxicity. This is Bleomycin hydrolase (BLMH) from Gallus gallus (Chicken).